The chain runs to 357 residues: Hsp70-binding protein 1 (357 aa).

Residues 1-68 (MADKGSGGSR…DPPPEPMSEE (68 aa)) are disordered. Gly residues predominate over residues 23-35 (SSGGSGSSAGGSG). ARM repeat units lie at residues 130 to 172 (ENMD…TCSQ), 175 to 215 (AAIQ…CLVR), 218 to 257 (EAGL…NLLV), and 260 to 299 (PEHK…SLVT). Serine 349 and serine 354 each carry phosphoserine.

As to quaternary structure, interacts with the ATP-binding domain of HSPA1A. Detected in a ternary complex containing STUB1, HSPA1A and HSPBP1. Interacts with PGLYRP1; this interaction blocks the cytotoxic activity of the PGLYRP1-HSPA1A complex.

In terms of biological role, inhibits HSPA1A chaperone activity by changing the conformation of the ATP-binding domain of HSPA1A and interfering with ATP binding. Interferes with ubiquitination mediated by STUB1 and inhibits chaperone-assisted degradation of target proteins. The protein is Hsp70-binding protein 1 (Hspbp1) of Mus musculus (Mouse).